Consider the following 167-residue polypeptide: Stress-related protein (167 aa).

The protein belongs to the REF/SRPP family.

Plays a role in plant defense. The sequence is that of Stress-related protein (SRP) from Phaseolus vulgaris (Kidney bean).